Consider the following 141-residue polypeptide: Large ribosomal subunit protein uL16 (141 aa).

Belongs to the universal ribosomal protein uL16 family. In terms of assembly, part of the 50S ribosomal subunit.

Its function is as follows. Binds 23S rRNA and is also seen to make contacts with the A and possibly P site tRNAs. The sequence is that of Large ribosomal subunit protein uL16 from Campylobacter jejuni subsp. jejuni serotype O:6 (strain 81116 / NCTC 11828).